We begin with the raw amino-acid sequence, 585 residues long: Optineurin (585 aa).

Residues 1 to 32 form a disordered region; sequence MSHQPLSCLTEKGDSSCETPGNGPSNMVHPNL. Polar residues predominate over residues 16-25; sequence SCETPGNGPS. Positions 38 to 181 form a coiled coil; it reads EELLQQMKEL…VSELQLKLNS (144 aa). The segment at 58–220 is interaction with Rab8; the sequence is MKLNNQAMKG…GPTRTDSISM (163 aa). The LIR signature appears at 187–192; that stretch reads DSFVEI. A phosphoserine mark is found at S188 and S209. Disordered stretches follow at residues 200-220 and 269-299; these read EGAM…SISM and FEKK…PESV. Residues 244–512 are a coiled coil; sequence CLREGNQKVE…LLKENNDFED (269 aa). A Phosphoserine modification is found at S346. The interaction with HD stretch occupies residues 415–585; it reads TKQQAEKVDK…LQIHVMDCII (171 aa). Positions 416–525 are interaction with MYO6; it reads KQQAEKVDKV…RQSLMEMQCR (110 aa). The UBAN signature appears at 478–483; sequence DFHAER. A Phosphoserine modification is found at S531. The CCHC NOA-type zinc finger occupies 555–585; it reads PRSIPIHSCPKCGEVLPDIDTLQIHVMDCII. Residues C563, C566, H579, and C583 each contribute to the Zn(2+) site.

As to quaternary structure, self-associates. Interacts with HD. Interacts with GTF3A. Interacts with MYO6. Interacts (via UBAN) with ubiquitinated TFRC. Interacts with GTP-bound Rab8 (RAB8A and/or RAB8B). Interacts with TBC1D17. Interacts with TBK1. Interacts with TRAF3. Binds to linear ubiquitin chains. Interacts with LC3 family members MAP1LC3A, MAP1LC3B, GABARAP, GABARAPL1 and GABARAPL2; OPTN phosphorylation increases the association (at least with MAP1LC3B). Interacts with RAB12; the interaction may be indirect. Interacts with TBK1; this interaction leads to the Golgi localization of TBK1 and its subsequent activation. Interacts with palmitoyltransferase ZDHHC17/HIP14; the interaction does not lead to palmitoylation of OPTN. Interacts with CYLD. Interacts with TOM1; the interaction is indirect and is mediated by MYO6, which acts as a bridge between TOM1 and OPTN. Interacts with USP12; the interaction is independent of USP12 deubiquitinase activity and may be involved in regulation of autophagic flux. Phosphorylated by TBK1, leading to restrict bacterial proliferation in case of infection.

It localises to the cytoplasm. It is found in the perinuclear region. The protein localises to the golgi apparatus. The protein resides in the trans-Golgi network. Its subcellular location is the cytoplasmic vesicle. It localises to the autophagosome. It is found in the recycling endosome. In terms of biological role, plays an important role in the maintenance of the Golgi complex, in membrane trafficking, in exocytosis, through its interaction with myosin VI and Rab8. Links myosin VI to the Golgi complex and plays an important role in Golgi ribbon formation. Negatively regulates the induction of IFNB in response to RNA virus infection. Plays a neuroprotective role in the eye and optic nerve. Probably part of the TNF-alpha signaling pathway that can shift the equilibrium toward induction of cell death. May act by regulating membrane trafficking and cellular morphogenesis via a complex that contains Rab8 and huntingtin (HD). Mediates the interaction of Rab8 with the probable GTPase-activating protein TBC1D17 during Rab8-mediated endocytic trafficking, such as that of transferrin receptor (TFRC/TfR); regulates Rab8 recruitment to tubules emanating from the endocytic recycling compartment. Autophagy receptor that interacts directly with both the cargo to become degraded and an autophagy modifier of the MAP1 LC3 family; targets ubiquitin-coated bacteria (xenophagy) and appears to function in the same pathway as SQSTM1 and CALCOCO2/NDP52. This is Optineurin (Optn) from Rattus norvegicus (Rat).